We begin with the raw amino-acid sequence, 457 residues long: Exodeoxyribonuclease 7 large subunit (457 aa).

The protein belongs to the XseA family. In terms of assembly, heterooligomer composed of large and small subunits.

It localises to the cytoplasm. The catalysed reaction is Exonucleolytic cleavage in either 5'- to 3'- or 3'- to 5'-direction to yield nucleoside 5'-phosphates.. In terms of biological role, bidirectionally degrades single-stranded DNA into large acid-insoluble oligonucleotides, which are then degraded further into small acid-soluble oligonucleotides. The chain is Exodeoxyribonuclease 7 large subunit from Escherichia coli O127:H6 (strain E2348/69 / EPEC).